The primary structure comprises 197 residues: RNA pyrophosphohydrolase (197 aa).

Residues 6–154 (GYRPNVGIVL…KREVYQLALS (149 aa)) form the Nudix hydrolase domain. The short motif at 38–59 (GGIQHGESPEQAMYRELHEEVG) is the Nudix box element.

It belongs to the Nudix hydrolase family. RppH subfamily. The cofactor is a divalent metal cation.

Functionally, accelerates the degradation of transcripts by removing pyrophosphate from the 5'-end of triphosphorylated RNA, leading to a more labile monophosphorylated state that can stimulate subsequent ribonuclease cleavage. The sequence is that of RNA pyrophosphohydrolase from Polynucleobacter necessarius subsp. necessarius (strain STIR1).